Reading from the N-terminus, the 484-residue chain is tRNA sulfurtransferase (484 aa).

Residues 63–167 (DVFADRLACI…QDKLYMVERR (105 aa)) form the THUMP domain. ATP-binding positions include 185–186 (LI), lysine 267, glycine 289, and glutamine 298. Cysteines 346 and 458 form a disulfide. A Rhodanese domain is found at 406 to 484 (VASGEIIIDV…GYTNVKVYRP (79 aa)). The active-site Cysteine persulfide intermediate is the cysteine 458.

Belongs to the ThiI family.

It localises to the cytoplasm. It carries out the reaction [ThiI sulfur-carrier protein]-S-sulfanyl-L-cysteine + a uridine in tRNA + 2 reduced [2Fe-2S]-[ferredoxin] + ATP + H(+) = [ThiI sulfur-carrier protein]-L-cysteine + a 4-thiouridine in tRNA + 2 oxidized [2Fe-2S]-[ferredoxin] + AMP + diphosphate. It catalyses the reaction [ThiS sulfur-carrier protein]-C-terminal Gly-Gly-AMP + S-sulfanyl-L-cysteinyl-[cysteine desulfurase] + AH2 = [ThiS sulfur-carrier protein]-C-terminal-Gly-aminoethanethioate + L-cysteinyl-[cysteine desulfurase] + A + AMP + 2 H(+). It functions in the pathway cofactor biosynthesis; thiamine diphosphate biosynthesis. Functionally, catalyzes the ATP-dependent transfer of a sulfur to tRNA to produce 4-thiouridine in position 8 of tRNAs, which functions as a near-UV photosensor. Also catalyzes the transfer of sulfur to the sulfur carrier protein ThiS, forming ThiS-thiocarboxylate. This is a step in the synthesis of thiazole, in the thiamine biosynthesis pathway. The sulfur is donated as persulfide by IscS. This chain is tRNA sulfurtransferase, found in Shewanella frigidimarina (strain NCIMB 400).